Consider the following 735-residue polypeptide: 2-5A-dependent ribonuclease (735 aa).

The interval 1 to 21 (METPDYNTPQGGTPSAGSQRT) is disordered. ANK repeat units lie at residues 24–53 (EDDS…DANA), 58–87 (WGWT…DPHR), 91–120 (NGAT…DVNE), 124–153 (NGFT…NVNL), 167–197 (GGAT…EVDA), 201–234 (MGRN…DVNV), 238–268 (RGKT…NIDA), 272–301 (EGKT…DKCD), and 303–328 (LVWI…NPDT). The interval 26-51 (DSSLIKAVQKGDVVRVQQLLEKGADA) is binding to TMEV Leader protein. 2-5A binding (P-loop) regions lie at residues 229-242 (GADV…GKTP) and 253-275 (GLVQ…EGKT). Residues 364–584 (IHDDYKIAGT…LVDLLGHPFF (221 aa)) enclose the Protein kinase domain. The C6-type zinc-finger motif lies at 401–436 (CKEVSCLRDCGDHSNLVAFYGREDDKGCLYVCVSLC). Positions 587–722 (WENRYRTLRN…KHFPQPPPRL (136 aa)) constitute a KEN domain. The segment at 714 to 735 (HFPQPPPRLSVPEAVGPGGIQS) is disordered.

This sequence belongs to the protein kinase superfamily. As to quaternary structure, (Microbial infection) Interacts (via N-terminus) with TMEV leader protein; this interaction prevents RNASEL activation by its substrate 2'-5' oligoadenylates. In terms of assembly, monomer (inactive form) or homodimer. Interacts with ABCE1; this interaction inhibits the RNASEL. It depends on Mn(2+) as a cofactor. Mg(2+) is required as a cofactor. In terms of tissue distribution, expressed in spleen, thymus, lung, testis, kidney, liver and heart.

It localises to the cytoplasm. The protein resides in the mitochondrion. Its activity is regulated as follows. After binding to 2-5A (5'-phosphorylated 2',5'-linked oligoadenylates) the homodimerization and subsequent activation occurs. Inhibited by RNASEL inhibitor ABCE1/RLI, a cytoplasmic member of the ATP-binding cassette (ABC) transporter family. Functionally, endoribonuclease that functions in the interferon (IFN) antiviral response. In INF treated and virus infected cells, RNASEL probably mediates its antiviral effects through a combination of direct cleavage of single-stranded viral RNAs, inhibition of protein synthesis through the degradation of rRNA, induction of apoptosis, and induction of other antiviral genes. RNASEL mediated apoptosis is the result of a JNK-dependent stress-response pathway leading to cytochrome c release from mitochondria and caspase-dependent apoptosis. Therefore, activation of RNASEL could lead to elimination of virus infected cells under some circumstances. In the crosstalk between autophagy and apoptosis proposed to induce autophagy as an early stress response to small double-stranded RNA and at later stages of prolonged stress to activate caspase-dependent proteolytic cleavage of BECN1 to terminate autophagy and promote apoptosis. Might play a central role in the regulation of mRNA turnover. Cleaves 3' of UpNp dimers, with preference for UU and UA sequences, to sets of discrete products ranging from between 4 and 22 nucleotides in length. The polypeptide is 2-5A-dependent ribonuclease (Rnasel) (Mus musculus (Mouse)).